A 311-amino-acid polypeptide reads, in one-letter code: Ribosomal RNA small subunit methyltransferase H (311 aa).

S-adenosyl-L-methionine contacts are provided by residues 34 to 36 (GGH), Asp-54, Phe-80, Asp-104, and Gln-111.

Belongs to the methyltransferase superfamily. RsmH family.

The protein resides in the cytoplasm. The catalysed reaction is cytidine(1402) in 16S rRNA + S-adenosyl-L-methionine = N(4)-methylcytidine(1402) in 16S rRNA + S-adenosyl-L-homocysteine + H(+). Its function is as follows. Specifically methylates the N4 position of cytidine in position 1402 (C1402) of 16S rRNA. The sequence is that of Ribosomal RNA small subunit methyltransferase H from Teredinibacter turnerae (strain ATCC 39867 / T7901).